The chain runs to 142 residues: Large ribosomal subunit protein uL11 (142 aa).

Residues 86 to 105 (LKSGSKEPGKQSAGQISRAK) form a disordered region.

It belongs to the universal ribosomal protein uL11 family. In terms of assembly, part of the ribosomal stalk of the 50S ribosomal subunit. Interacts with L10 and the large rRNA to form the base of the stalk. L10 forms an elongated spine to which L12 dimers bind in a sequential fashion forming a multimeric L10(L12)X complex. In terms of processing, one or more lysine residues are methylated.

Its function is as follows. Forms part of the ribosomal stalk which helps the ribosome interact with GTP-bound translation factors. This chain is Large ribosomal subunit protein uL11, found in Chelativorans sp. (strain BNC1).